The following is a 1252-amino-acid chain: ABC transporter B family member 19 (1252 aa).

N-linked (GlcNAc...) asparagine glycosylation occurs at Asn-5. An ABC transmembrane type-1 1 domain is found at 41-330 (MFVGSLGAIV…SFSNLGAFSK (290 aa)). 2 helical membrane-spanning segments follow: residues 42–62 (FVGS…FLLF) and 88–108 (LYFV…IACW). Asp-136 provides a ligand contact to ATP. 4 helical membrane passes run 163–183 (VGNF…GFVS), 187–207 (LALL…LYAY), 274–294 (CTYG…GVFI), and 308–328 (IFSA…LGAF). Brassinolide is bound by residues Tyr-276 and Trp-283. The ABC transporter 1 domain maps to 365–601 (IEFKDVTFSY…SGAYASLIRF (237 aa)). 7 residues coordinate ATP: Tyr-374, Ser-376, Gly-405, Lys-406, Ser-407, Thr-408, and Glu-529. Asn-641 carries N-linked (GlcNAc...) asparagine glycosylation. The ABC transmembrane type-1 2 domain occupies 687 to 975 (SIMGAVGSIL…TVSLAPEIIR (289 aa)). Transmembrane regions (helical) follow at residues 688–708 (IMGA…AIVM) and 732–752 (FIYI…HYFF). Residue Asn-758 is glycosylated (N-linked (GlcNAc...) asparagine). Position 780 (Asp-780) interacts with ATP. Asn-785 and Asn-814 each carry an N-linked (GlcNAc...) asparagine glycan. A run of 3 helical transmembrane segments spans residues 822 to 842 (FIVA…TFPL), 914 to 934 (GFLF…ILWY), and 949 to 969 (VIKV…TVSL). The interaction with FKBP42/TWD1 stretch occupies residues 965–1252 (ETVSLAPEII…RLLQLQTHRI (288 aa)). Residues 1010–1246 (IEFRHVDFAY…PEGAYSRLLQ (237 aa)) form the ABC transporter 2 domain. Tyr-1019, Ser-1021, Arg-1022, Lys-1051, Ser-1052, and Ser-1053 together coordinate ATP.

The protein belongs to the ABC transporter superfamily. ABCB family. Multidrug resistance exporter (TC 3.A.1.201) subfamily. Interacts with 1-naphthylphthalamic acid (NPA), and FKBP42/TWD1. Post-translationally, phosphorylated by PHOT1 in phototropic seedlings, to modulates auxin export and distribution and regulates leaf and petiole curling. Ubiquitous, mostly in shoot meristems. Present in the majority of stem cells, predominantly in a non-polar manner. Accumulates in seedlings roots and hypocotyls, and in roots apices and inflorescences.

It localises to the cell membrane. The catalysed reaction is (indol-3-yl)acetate(in) + ATP + H2O = (indol-3-yl)acetate(out) + ADP + phosphate + H(+). It carries out the reaction brassinolide(in) + ATP + H2O = brassinolide(out) + ADP + phosphate + H(+). It catalyses the reaction 24-epi-brassinolide(in) + ATP + H2O = 24-epi-brassinolide(out) + ADP + phosphate + H(+). The enzyme catalyses 24-epi-castasterone(in) + ATP + H2O = 24-epi-castasterone(out) + ADP + phosphate + H(+). The catalysed reaction is castasterone(in) + ATP + H2O = castasterone(out) + ADP + phosphate + H(+). With respect to regulation, transport capacity is stimulated by the chaperone protein FKBP42/TWD1. ATPase activity is specifically activated by bioactive brassinosteroids in a dose-dependent manner, including brassinolide (BL), 24-epiBL and 24-epicastasterone (24-epiCS). Inhibited by vanadate. In terms of biological role, brassinosteroid exporter that, in conjunction with ABCB1, supports the accumulation of exogenous brassinosteroids (BR) in the apoplast, thus promoting BR signaling initiation involving the specific receptor BRI1 and required for plant growth and stress responses. Mediates the transport of castasterone (CSA) and brassinolide (BL) across the plasma membrane. Auxin efflux transporter that acts as a negative regulator of light signaling to promote hypocotyl elongation by mediating leaf tip to petiole auxin flux. Required for the regulation of leaf position and morphology during PHOT1-mediated blue light responses involving auxin distribution, especially in low light fluence. Together with ABCB1 and in a FKBP42/TWD1-dependent manner, supports seed development by promoting stamen elongation and, to a lesser extent, anther dehiscence and pollen maturation, probably as auxin transporters. Contributes to the connective auxin transport (CAT) that ensures communication across the shoot system, including auxin loading at axillary bud apices to influence strigolactone-mediated bud outgrowth responses and shoot branching control. Mediates the accumulation of chlorophyll and anthocyanin, as well as the expression of genes in response to light. Participates in auxin efflux and thus regulates the polar auxin basipetal transport (from auxin-producing leaves to auxin-sensitive tissues, and from root tips to root elongating zone). Involved in diverse auxin-mediated responses including gravitropism, phototropism and lateral root formation. Required for the regulation of organ bending, such as gravitropic root bending. This Arabidopsis thaliana (Mouse-ear cress) protein is ABC transporter B family member 19.